We begin with the raw amino-acid sequence, 108 residues long: Insulin-1 (108 aa).

Residues 1-24 form the signal peptide; that stretch reads MALLVHFLPLLALLALWEPKPTQA. 3 disulfides stabilise this stretch: C31/C94, C43/C107, and C93/C98. A propeptide spans 57-85 (c peptide); sequence EVEDPQVEQLELGGSPGDLQTLALEVARQ.

This sequence belongs to the insulin family. In terms of assembly, heterodimer of a B chain and an A chain linked by two disulfide bonds.

It localises to the secreted. In terms of biological role, insulin decreases blood glucose concentration. It increases cell permeability to monosaccharides, amino acids and fatty acids. It accelerates glycolysis, the pentose phosphate cycle, and glycogen synthesis in liver. This Mus musculus (Mouse) protein is Insulin-1 (Ins1).